The chain runs to 403 residues: Non-structural maintenance of chromosomes element 4 homolog A (403 aa).

Residues 1-45 (MRKTVKRESEATGGKREADDEPEKLRSVKKEKQRKTEADSVRPDE) show a composition bias toward basic and acidic residues. 3 disordered regions span residues 1-57 (MRKT…QGIS), 194-226 (LKQR…EEKT), and 342-403 (SSCP…LTSS). A compositionally biased stretch (basic residues) spans 196-206 (QRKRAPNRKRT). Over residues 342–353 (SSCPAASAPASA) the composition is skewed to low complexity. Over residues 354–363 (DFTQDTQTTP) the composition is skewed to polar residues. Basic and acidic residues predominate over residues 384-393 (TPDKEGDGTR). Residues 394–403 (RRCKRRLTSS) are compositionally biased toward basic residues.

This sequence belongs to the NSE4 family. In terms of assembly, interacts with SMC5, SMC6A or SMC6B. The SMC5-SMC6 complex is composed of the SMC5 and SMC6 heterodimer attached via their hinge domain and from the non-SMC subunit NSE4A or NSE4B. In terms of tissue distribution, expressed in seedlings, rosette leaves and floral buds.

Its subcellular location is the nucleus. Its function is as follows. Component of the SMC5-SMC6 complex, that promotes sister chromatid alignment after DNA damage and facilitates double-stranded DNA breaks (DSBs) repair via homologous recombination between sister chromatids. The sequence is that of Non-structural maintenance of chromosomes element 4 homolog A (NSE4A) from Arabidopsis thaliana (Mouse-ear cress).